Reading from the N-terminus, the 331-residue chain is Ornithine carbamoyltransferase (331 aa).

Carbamoyl phosphate contacts are provided by residues 55 to 58, Q82, R106, and 133 to 136; these read STRT and HPTQ. L-ornithine contacts are provided by residues N166, D230, and 234 to 235; that span reads SM. Carbamoyl phosphate-binding positions include 272–273 and R317; that span reads CL.

This sequence belongs to the aspartate/ornithine carbamoyltransferase superfamily. OTCase family.

It localises to the cytoplasm. It carries out the reaction carbamoyl phosphate + L-ornithine = L-citrulline + phosphate + H(+). Its pathway is amino-acid biosynthesis; L-arginine biosynthesis; L-arginine from L-ornithine and carbamoyl phosphate: step 1/3. Reversibly catalyzes the transfer of the carbamoyl group from carbamoyl phosphate (CP) to the N(epsilon) atom of ornithine (ORN) to produce L-citrulline. In Neisseria gonorrhoeae, this protein is Ornithine carbamoyltransferase (argF).